The following is a 548-amino-acid chain: Chaperone Ric-8A (548 aa).

Disordered regions lie at residues Asp-443–Thr-484 and Gly-517–Asn-548.

Belongs to the synembryn family.

The protein resides in the cytoplasm. It is found in the cell cortex. In terms of biological role, chaperone that specifically binds and folds nascent G alpha proteins prior to G protein heterotrimer formation, promoting their stability and activity: folds GNAI1, GNAO1, GNA13 and GNAQ. Does not fold G(s) G-alpha proteins GNAS nor GNAL. Also acts as a guanine nucleotide exchange factor (GEF) for G alpha proteins by stimulating exchange of bound GDP for free GTP. This Danio rerio (Zebrafish) protein is Chaperone Ric-8A (ric8a).